Consider the following 288-residue polypeptide: MTKKAWFLPLVCVLLISGWLAPAASASAQTTLSLNDRLASSPSGTGSLLSLAAPAAPYADTDTYYEGAEGKTGDSLKSTLHRIISGHTMLSYSEVWNALKETDEDPRNPNNVILLYTNESRSKNLNGGNVGDWNREHVWAKSHGDFGTSKGPGTDIHHLRPADVQVNSARGNMDFDNGGTEYAKAPGNYYDGDSWEPRDDVKGDVARMLFYMAVRYEGDDGYPDLELNDKTGNGSAPYHGKQSVLLEWNKQDPVDDRERKRNEIIYEKYQHNRNPFIDHPEWADEIWP.

The signal sequence occupies residues 1-26 (MTKKAWFLPLVCVLLISGWLAPAASA).

Its subcellular location is the secreted. Functionally, mg(2+)-activated ribonuclease which hydrolyzes RNA apparently nonspecifically into oligonucleotides with 5'-terminal phosphate. The chain is Extracellular ribonuclease (bsn) from Bacillus subtilis (strain 168).